The chain runs to 251 residues: uncharacterized protein (251 aa).

Positions 1-18 (MKILIILSIILCSLFGRA) are cleaved as a signal peptide.

It belongs to the MlaA family.

This is an uncharacterized protein from Rickettsia prowazekii (strain Madrid E).